We begin with the raw amino-acid sequence, 263 residues long: MECCRFGLVSVPVQLFTAVERHTIRFHQVQRGTGDRVRQKRVNERTGQEVPFEEVVKGYPTEDGWVIVDPKELEDIAPGRSRTLEIVGFVDLDEIAPVYFRDTYYLAPSGPQYTKVYGLLREALATANRAGIATFVMRNRQYLAALKAEHEVLAVYLLHWADEVRDPHRELGASLPDHSGASEQELRMAVQLIEAMAIDWDPADYHDTYQQQVQALIDAKRAGGTLEPGIPPPRETEAVDLMQALRASVEHARAGRSGDRDTH.

Residues 6 to 169 enclose the Ku domain; it reads FGLVSVPVQL…WADEVRDPHR (164 aa).

The protein belongs to the prokaryotic Ku family. Homodimer. Interacts with LigD.

In terms of biological role, with LigD forms a non-homologous end joining (NHEJ) DNA repair enzyme, which repairs dsDNA breaks with reduced fidelity. Binds linear dsDNA with 5'- and 3'- overhangs but not closed circular dsDNA nor ssDNA. Recruits and stimulates the ligase activity of LigD. This Saccharopolyspora erythraea (strain ATCC 11635 / DSM 40517 / JCM 4748 / NBRC 13426 / NCIMB 8594 / NRRL 2338) protein is Non-homologous end joining protein Ku 3.